A 133-amino-acid polypeptide reads, in one-letter code: ATP synthase epsilon chain (133 aa).

The protein belongs to the ATPase epsilon chain family. As to quaternary structure, F-type ATPases have 2 components, CF(1) - the catalytic core - and CF(0) - the membrane proton channel. CF(1) has five subunits: alpha(3), beta(3), gamma(1), delta(1), epsilon(1). CF(0) has three main subunits: a, b and c.

It is found in the cell membrane. Functionally, produces ATP from ADP in the presence of a proton gradient across the membrane. The sequence is that of ATP synthase epsilon chain from Bacillus anthracis (strain A0248).